A 298-amino-acid polypeptide reads, in one-letter code: ATP synthase gamma chain (298 aa).

The protein belongs to the ATPase gamma chain family. In terms of assembly, F-type ATPases have 2 components, CF(1) - the catalytic core - and CF(0) - the membrane proton channel. CF(1) has five subunits: alpha(3), beta(3), gamma(1), delta(1), epsilon(1). CF(0) has three main subunits: a, b and c.

It localises to the cell membrane. Its function is as follows. Produces ATP from ADP in the presence of a proton gradient across the membrane. The gamma chain is believed to be important in regulating ATPase activity and the flow of protons through the CF(0) complex. The sequence is that of ATP synthase gamma chain from Frankia casuarinae (strain DSM 45818 / CECT 9043 / HFP020203 / CcI3).